Here is a 147-residue protein sequence, read N- to C-terminus: Hemoglobin subunit beta-2 (147 aa).

One can recognise a Globin domain in the interval 3-147 (HWTAEEKAAI…LVDGLSQGYN (145 aa)). Positions 64 and 93 each coordinate heme b.

Belongs to the globin family. Heterotetramer of two alpha chains and two beta chains. In terms of tissue distribution, red blood cells.

Functionally, involved in oxygen transport from the lung to the various peripheral tissues. The sequence is that of Hemoglobin subunit beta-2 (hbb2) from Xenopus laevis (African clawed frog).